We begin with the raw amino-acid sequence, 842 residues long: DNA mismatch repair protein MutS (842 aa).

Residue 596–603 participates in ATP binding; the sequence is GPNMSGKS.

Belongs to the DNA mismatch repair MutS family.

Its function is as follows. This protein is involved in the repair of mismatches in DNA. It is possible that it carries out the mismatch recognition step. This protein has a weak ATPase activity. This is DNA mismatch repair protein MutS from Exiguobacterium sp. (strain ATCC BAA-1283 / AT1b).